Here is a 481-residue protein sequence, read N- to C-terminus: Membrane-bound lytic murein transglycosylase F (481 aa).

Residues 1 to 21 form the signal peptide; sequence MKPLKLNYFFIGIITLLLALA. The interval 22–268 is non-LT domain; that stretch reads LWPSIPWRSS…RLEEKYLGHV (247 aa). The tract at residues 269-481 is LT domain; sequence GEFDYVDTTT…PAVPLTKVPE (213 aa). Residue glutamate 313 is part of the active site.

This sequence in the N-terminal section; belongs to the bacterial solute-binding protein 3 family. In the C-terminal section; belongs to the transglycosylase Slt family.

It localises to the cell outer membrane. The enzyme catalyses Exolytic cleavage of the (1-&gt;4)-beta-glycosidic linkage between N-acetylmuramic acid (MurNAc) and N-acetylglucosamine (GlcNAc) residues in peptidoglycan, from either the reducing or the non-reducing ends of the peptidoglycan chains, with concomitant formation of a 1,6-anhydrobond in the MurNAc residue.. In terms of biological role, murein-degrading enzyme that degrades murein glycan strands and insoluble, high-molecular weight murein sacculi, with the concomitant formation of a 1,6-anhydromuramoyl product. Lytic transglycosylases (LTs) play an integral role in the metabolism of the peptidoglycan (PG) sacculus. Their lytic action creates space within the PG sacculus to allow for its expansion as well as for the insertion of various structures such as secretion systems and flagella. In Pectobacterium atrosepticum (strain SCRI 1043 / ATCC BAA-672) (Erwinia carotovora subsp. atroseptica), this protein is Membrane-bound lytic murein transglycosylase F.